A 539-amino-acid polypeptide reads, in one-letter code: Putative cysteine ligase BshC (539 aa).

A coiled-coil region spans residues 455 to 475; the sequence is LQKNAAFIQDQLLFLERTVTK.

This sequence belongs to the BshC family.

Involved in bacillithiol (BSH) biosynthesis. May catalyze the last step of the pathway, the addition of cysteine to glucosamine malate (GlcN-Mal) to generate BSH. This chain is Putative cysteine ligase BshC, found in Bacillus velezensis (strain DSM 23117 / BGSC 10A6 / LMG 26770 / FZB42) (Bacillus amyloliquefaciens subsp. plantarum).